Consider the following 74-residue polypeptide: Translation initiation factor IF-1 (74 aa).

The S1-like domain maps to 1–72 (MAKETEMEFE…TRGRITYRKI (72 aa)).

The protein belongs to the IF-1 family. Component of the 30S ribosomal translation pre-initiation complex which assembles on the 30S ribosome in the order IF-2 and IF-3, IF-1 and N-formylmethionyl-tRNA(fMet); mRNA recruitment can occur at any time during PIC assembly.

Its subcellular location is the cytoplasm. In terms of biological role, one of the essential components for the initiation of protein synthesis. Stabilizes the binding of IF-2 and IF-3 on the 30S subunit to which N-formylmethionyl-tRNA(fMet) subsequently binds. Helps modulate mRNA selection, yielding the 30S pre-initiation complex (PIC). Upon addition of the 50S ribosomal subunit IF-1, IF-2 and IF-3 are released leaving the mature 70S translation initiation complex. This is Translation initiation factor IF-1 from Mycoplasma capricolum subsp. capricolum (strain California kid / ATCC 27343 / NCTC 10154).